Consider the following 278-residue polypeptide: Undecaprenyl-diphosphatase 1 (278 aa).

A run of 7 helical transmembrane segments spans residues Met1–Leu21, Ala43–Leu63, Ile83–Leu103, Leu112–Ile132, Phe192–Tyr212, Ile224–Trp244, and Phe257–Ile277.

It belongs to the UppP family.

Its subcellular location is the cell membrane. The catalysed reaction is di-trans,octa-cis-undecaprenyl diphosphate + H2O = di-trans,octa-cis-undecaprenyl phosphate + phosphate + H(+). Functionally, catalyzes the dephosphorylation of undecaprenyl diphosphate (UPP). Confers resistance to bacitracin. The chain is Undecaprenyl-diphosphatase 1 from Oenococcus oeni (strain ATCC BAA-331 / PSU-1).